Reading from the N-terminus, the 216-residue chain is ATP-dependent Clp protease proteolytic subunit 1 (216 aa).

Residue S119 is the Nucleophile of the active site. Residue H144 is part of the active site.

It belongs to the peptidase S14 family. In terms of assembly, fourteen ClpP subunits assemble into 2 heptameric rings which stack back to back to give a disk-like structure with a central cavity, resembling the structure of eukaryotic proteasomes.

It localises to the cytoplasm. The catalysed reaction is Hydrolysis of proteins to small peptides in the presence of ATP and magnesium. alpha-casein is the usual test substrate. In the absence of ATP, only oligopeptides shorter than five residues are hydrolyzed (such as succinyl-Leu-Tyr-|-NHMec, and Leu-Tyr-Leu-|-Tyr-Trp, in which cleavage of the -Tyr-|-Leu- and -Tyr-|-Trp bonds also occurs).. Its function is as follows. Cleaves peptides in various proteins in a process that requires ATP hydrolysis. Has a chymotrypsin-like activity. Plays a major role in the degradation of misfolded proteins. The protein is ATP-dependent Clp protease proteolytic subunit 1 of Cutibacterium acnes (strain DSM 16379 / KPA171202) (Propionibacterium acnes).